A 1706-amino-acid polypeptide reads, in one-letter code: Bifunctional hemolysin/adenylate cyclase (1706 aa).

Residues 1–399 (MQQSHQAGYA…RRPSLGAVER (399 aa)) form an a, catalytic region. Residue 349 to 356 (AYGVAGKS) participates in ATP binding. Residues 367-405 (GVPGGRSKSSPDVLETVPASPGLRRPSLGAVERQDSGYD) are disordered. Residues 400–912 (QDSGYDSLDG…LKHSIKLEVI (513 aa)) are b, Ala/Gly-rich. The tract at residues 500–698 (LSAAVFGLGE…SVVGAPVAVV (199 aa)) is required for interaction with CyaC. 2 N6-palmitoyl lysine lipidation sites follow: lysine 860 and lysine 983. The tract at residues 913–1656 (GGDGDDVVLA…RDADHRVEAI (744 aa)) is c. Hemolysin-type calcium-binding repeat units follow at residues 1014 to 1031 (IGGA…DNFL), 1032 to 1049 (AGGA…NDTL), 1050 to 1067 (VGGE…DDVF), 1155 to 1172 (WGDD…DDIL), 1173 to 1190 (RGGL…NDIF), 1279 to 1296 (MGQG…DDLL), 1297 to 1314 (FGGD…NDTL), 1315 to 1332 (YGGL…NDWF), 1335 to 1352 (TPAR…VDTV), 1411 to 1428 (TGDA…ADVL), 1429 to 1446 (AGGE…DDQL), 1447 to 1464 (SGDA…DDWF), 1468 to 1484 (AANA…NDTV), 1537 to 1554 (IGDA…NDVL), 1555 to 1572 (SGGA…SDLL), 1573 to 1590 (SGDA…DDTY), and 1603 to 1620 (ESGG…ADQL). Positions 1657–1706 (HAANQAIDPAGIEKLVEAMAQYPDPGAAAAAPPAARVPDTLMQSLAVNWR) are d, Asp/Gly-rich.

It in the N-terminal section; belongs to the adenylyl cyclase class-2 family. The protein in the C-terminal section; belongs to the RTX prokaryotic toxin family. Post-translationally, released in a processed form. In terms of processing, palmitoylated at Lys-860 and Lys-983 by CyaC. The toxin only becomes active when modified in position Lys-983: palmitoylation is required for efficient membrane insertion and pore formation of the acylated Hemolysin chain.

It is found in the secreted. It localises to the host cell membrane. The catalysed reaction is ATP = 3',5'-cyclic AMP + diphosphate. With respect to regulation, activated by host calmodulin. Functionally, bifunctional adenylate cyclase toxin-hemolysin that plays a crucial role in host colonization. It causes whooping cough by acting on mammalian cells by elevating cAMP-concentration and thus disrupts normal cell function. Its function is as follows. Adenylate cyclase that is activated by host intracellular calmodulin and catalyzes un-regulated conversion of ATP to cAMP, thereby impairing microbicidal functions of immune effector cells and inducing apoptosis of lung macrophages. In terms of biological role, hemolysin that forms small cation-selective membrane channels, leading to hemolytic activity. The hemolytic activity of CyaA is weak compared with that of the HlyA of E.coli. This is Bifunctional hemolysin/adenylate cyclase (cya) from Bordetella bronchiseptica (strain ATCC BAA-588 / NCTC 13252 / RB50) (Alcaligenes bronchisepticus).